A 327-amino-acid polypeptide reads, in one-letter code: MDLINGMGTSPGYWRTPREPGNDHRRARLDVMAQRIVITGAGGMVGRVLADQAAAKGHTVLALTSSQCDITDEDAVRRFVANGDVVINCAAYTQVDKAEDEPERAHAVNAVGPGNLAKACAAVDAGLIHISTDYVFGAVDRDTPYEVDDETGPVNIYGRTKLAGEQAVLAAKPDAYVVRTAWVYRGGDGSDFVATMRRLAAGDGAIDVVADQVGSPTYTGDLVGALLQIVDGGVEPGILHAANAGVASRFDQARATFEAVGADPERVRPCGSDRHPRPAPRPSYTVLSSQRSAQAGLTPLRDWREALQDAVAAVVGATTDGPLPSTP.

Positions 1 to 22 (MDLINGMGTSPGYWRTPREPGN) are disordered. Residues 43 to 45 (GMV), 69 to 70 (DI), and 91 to 93 (AYT) contribute to the NADH site. Residues 44–45 (MV), 69–70 (DI), and 91–93 (AYT) contribute to the NADPH site. A dTDP-beta-L-rhamnose-binding site is contributed by 132–133 (TD). The NADH site is built by Y157 and K161. NADPH-binding residues include Y157 and K161. Residue Y157 is the Proton donor/acceptor of the active site. Residue W182 participates in dTDP-beta-L-rhamnose binding. A compositionally biased stretch (basic and acidic residues) spans 264–276 (PERVRPCGSDRHP). The segment at 264–292 (PERVRPCGSDRHPRPAPRPSYTVLSSQRS) is disordered.

The protein belongs to the dTDP-4-dehydrorhamnose reductase family. It depends on Mg(2+) as a cofactor.

It carries out the reaction dTDP-beta-L-rhamnose + NADP(+) = dTDP-4-dehydro-beta-L-rhamnose + NADPH + H(+). It functions in the pathway carbohydrate biosynthesis; dTDP-L-rhamnose biosynthesis. Functionally, involved in the biosynthesis of the dTDP-L-rhamnose which is a component of the critical linker, D-N-acetylglucosamine-L-rhamnose disaccharide, which connects the galactan region of arabinogalactan to peptidoglycan via a phosphodiester linkage. Catalyzes the reduction of dTDP-6-deoxy-L-lyxo-4-hexulose to yield dTDP-L-rhamnose. This chain is dTDP-4-dehydrorhamnose reductase, found in Mycolicibacterium smegmatis (strain ATCC 700084 / mc(2)155) (Mycobacterium smegmatis).